The chain runs to 202 residues: MTSPANPSEVTRDRRNRGVAFVCAGVFVAMVGMSFAAVPLYRLFCQVTGYGGTTQRVEQYSDTILDRTINVRFDANTSGVPWEFKPKQREITLRIGETTEIAYVARNNAPTTTTGTATYNVAPALAGAYFNKIECFCFTKQSLEPGQTYEMPVQFFVDPEIVNVPELKNLKTITLSYTFYPNNQESAEGPAEGAAKTQKLGG.

The Cytoplasmic segment spans residues 1–14 (MTSPANPSEVTRDR). A helical; Signal-anchor for type II membrane protein transmembrane segment spans residues 15–37 (RNRGVAFVCAGVFVAMVGMSFAA). The Periplasmic portion of the chain corresponds to 38 to 202 (VPLYRLFCQV…GAAKTQKLGG (165 aa)).

Belongs to the COX11/CtaG family.

It is found in the cell inner membrane. Functionally, exerts its effect at some terminal stage of cytochrome c oxidase synthesis, probably by being involved in the insertion of the copper B into subunit I. This chain is Cytochrome c oxidase assembly protein CtaG, found in Chelativorans sp. (strain BNC1).